A 184-amino-acid chain; its full sequence is Ribosome maturation factor RimM (184 aa).

One can recognise a PRC barrel domain in the interval 106–184 (PGDYYWYQLE…RMIVDWDPEF (79 aa)).

It belongs to the RimM family. In terms of assembly, binds ribosomal protein uS19.

It is found in the cytoplasm. An accessory protein needed during the final step in the assembly of 30S ribosomal subunit, possibly for assembly of the head region. Essential for efficient processing of 16S rRNA. May be needed both before and after RbfA during the maturation of 16S rRNA. It has affinity for free ribosomal 30S subunits but not for 70S ribosomes. The sequence is that of Ribosome maturation factor RimM from Chromohalobacter salexigens (strain ATCC BAA-138 / DSM 3043 / CIP 106854 / NCIMB 13768 / 1H11).